The chain runs to 290 residues: Large ribosomal subunit protein uL2m (290 aa).

It belongs to the universal ribosomal protein uL2 family. Probably part of the large ribosomal subunit.

Its subcellular location is the hydrogenosome. The protein is Large ribosomal subunit protein uL2m (rpl2) of Nyctotherus ovalis.